The sequence spans 336 residues: DNA-directed RNA polymerase subunit alpha (336 aa).

Residues 1-232 (MIQKNWQELI…DQLSVFVNFD (232 aa)) are alpha N-terminal domain (alpha-NTD). The alpha C-terminal domain (alpha-CTD) stretch occupies residues 248–336 (FNPALLKKVD…DLAKRYEDQY (89 aa)).

It belongs to the RNA polymerase alpha chain family. Homodimer. The RNAP catalytic core consists of 2 alpha, 1 beta, 1 beta' and 1 omega subunit. When a sigma factor is associated with the core the holoenzyme is formed, which can initiate transcription.

It catalyses the reaction RNA(n) + a ribonucleoside 5'-triphosphate = RNA(n+1) + diphosphate. In terms of biological role, DNA-dependent RNA polymerase catalyzes the transcription of DNA into RNA using the four ribonucleoside triphosphates as substrates. The polypeptide is DNA-directed RNA polymerase subunit alpha (Sinorhizobium fredii (strain NBRC 101917 / NGR234)).